The sequence spans 211 residues: Small ribosomal subunit protein uS3c (211 aa).

The KH type-2 domain occupies 39–109; sequence IREFAESRLP…NVALYVTKTQ (71 aa).

It belongs to the universal ribosomal protein uS3 family. As to quaternary structure, part of the 30S ribosomal subunit.

The protein localises to the plastid. It localises to the chloroplast. The protein is Small ribosomal subunit protein uS3c (rps3) of Ostreococcus tauri.